Reading from the N-terminus, the 182-residue chain is UPF0316 protein Sde_0566 (182 aa).

The next 3 helical transmembrane spans lie at 7–27 (VAPE…VSLG), 41–61 (LAAF…GQVF), and 67–87 (WYLA…GMWI).

Belongs to the UPF0316 family.

It is found in the cell membrane. In Saccharophagus degradans (strain 2-40 / ATCC 43961 / DSM 17024), this protein is UPF0316 protein Sde_0566.